An 829-amino-acid polypeptide reads, in one-letter code: MSKLDLEEVNSMQRGKVHGPFLVENMVCQKNHMLTSKGVFLGSDPLKYAMPLMLLQMSVIIITSRLLYRLLKPLKQGMISAQVLAGIILGPSLFGQSSAYMQMFLPISGKITLQTLSNLGFFIHLFLLGLRIDASIIRKAGSKAILIGTASYALPFSLGNLTVLFLKNTYNLPPDVVHCISTVISLNAMTSFPVTTTVLAELNILNSDLGRLATNCSIVCEAFSWIVALVFRMFLRDGTLASVWSFVWVTALILVIFFVCRPAIIWLTERRSISIDKAGEIPFFPIIMVLLTISLTSEVLGVHAAFGAFWLGVSLPDGPPLGTGLTTKLEMFATSLMLPCFISISGLQTNFFIIGESHVKIIEAVILITYGCKFLGTAAASAYCNIQIGDAFSLALLMCCQGVIEIYTCVMWKDEKVLNTECFNLLIITLLLVTGISRFLVVCLYDPSKRYRSKSKRTILDTRQRNLQFRLLLCVYNVENVPSMVNLLEASYPSRFSPISVFTLHLVELKGRAHAVLVPHHQMNKLDPNTVQSTHIVNGFQRFEQQNQGTLMAQHFTAAAPFSSINDDICTLALDKKATLIVIPFHKQYAIDGTVDHVNPSIRNINLNVLEKAPCSVGIFIDRGETEGRRSVLMSYTWRNVAVIFIEGRDDAEALAFSMRIAEHPEVSVTMIHFRHKSSLQQNHVVDVESELAESYLINDFKNFAMSKPKISYREEIVRDGVETTQVISSLGDSFDLVVVGRDHDLESSVLYGLTDWSECPELGVIGDMFASSDFHFSVLVIHQQEGDSLAMDNSYKLPASPHRVGDPRVHPRFSVEEGFTSVDLHSNR.

12 helical membrane-spanning segments follow: residues 48-68 (YAMPLMLLQMSVIIITSRLLY), 77-97 (GMISAQVLAGIILGPSLFGQS), 117-137 (SNLGFFIHLFLLGLRIDASII), 145-165 (ILIGTASYALPFSLGNLTVLF), 180-200 (ISTVISLNAMTSFPVTTTVLA), 215-235 (NCSIVCEAFSWIVALVFRMFL), 240-260 (LASVWSFVWVTALILVIFFVC), 281-301 (IPFFPIIMVLLTISLTSEVLG), 329-349 (LEMFATSLMLPCFISISGLQT), 361-383 (IIEAVILITYGCKFLGTAAASAY), 392-412 (FSLALLMCCQGVIEIYTCVMW), and 425-445 (LLIITLLLVTGISRFLVVCLY). Residue Ser-827 is modified to Phosphoserine.

It belongs to the monovalent cation:proton antiporter 2 (CPA2) transporter (TC 2.A.37) family. CHX (TC 2.A.37.4) subfamily. In terms of tissue distribution, preferentially expressed in pollen but also detected in vegetative tissues like leaf trichomes and root vascular tissues.

Its subcellular location is the membrane. May operate as a cation/H(+) antiporter. The chain is Cation/H(+) antiporter 14 (CHX14) from Arabidopsis thaliana (Mouse-ear cress).